We begin with the raw amino-acid sequence, 486 residues long: Glutamyl-tRNA(Gln) amidotransferase subunit A (486 aa).

Residues Lys-79 and Ser-154 each act as charge relay system in the active site. Catalysis depends on Ser-178, which acts as the Acyl-ester intermediate.

Belongs to the amidase family. GatA subfamily. In terms of assembly, heterotrimer of A, B and C subunits.

It catalyses the reaction L-glutamyl-tRNA(Gln) + L-glutamine + ATP + H2O = L-glutaminyl-tRNA(Gln) + L-glutamate + ADP + phosphate + H(+). Functionally, allows the formation of correctly charged Gln-tRNA(Gln) through the transamidation of misacylated Glu-tRNA(Gln) in organisms which lack glutaminyl-tRNA synthetase. The reaction takes place in the presence of glutamine and ATP through an activated gamma-phospho-Glu-tRNA(Gln). This is Glutamyl-tRNA(Gln) amidotransferase subunit A from Dehalococcoides mccartyi (strain CBDB1).